A 671-amino-acid polypeptide reads, in one-letter code: Alpha-1,4-glucan:maltose-1-phosphate maltosyltransferase (671 aa).

Alpha-maltose 1-phosphate-binding residues include K252, Q312, and D347. D382 functions as the Nucleophile in the catalytic mechanism. N383 is an alpha-maltose 1-phosphate binding site. The Proton donor role is filled by E411. Residue 521-522 (KY) coordinates alpha-maltose 1-phosphate.

The protein belongs to the glycosyl hydrolase 13 family. GlgE subfamily. Homodimer.

It carries out the reaction alpha-maltose 1-phosphate + [(1-&gt;4)-alpha-D-glucosyl](n) = [(1-&gt;4)-alpha-D-glucosyl](n+2) + phosphate. Its function is as follows. Maltosyltransferase that uses maltose 1-phosphate (M1P) as the sugar donor to elongate linear or branched alpha-(1-&gt;4)-glucans. Is involved in a branched alpha-glucan biosynthetic pathway from trehalose, together with TreS, Mak and GlgB. This is Alpha-1,4-glucan:maltose-1-phosphate maltosyltransferase from Corynebacterium pseudotuberculosis (strain 1002).